Here is a 430-residue protein sequence, read N- to C-terminus: Glutamate-1-semialdehyde 2,1-aminomutase (430 aa).

Residue Lys-265 is modified to N6-(pyridoxal phosphate)lysine.

The protein belongs to the class-III pyridoxal-phosphate-dependent aminotransferase family. HemL subfamily. In terms of assembly, homodimer. Requires pyridoxal 5'-phosphate as cofactor.

The protein resides in the cytoplasm. It carries out the reaction (S)-4-amino-5-oxopentanoate = 5-aminolevulinate. The protein operates within porphyrin-containing compound metabolism; protoporphyrin-IX biosynthesis; 5-aminolevulinate from L-glutamyl-tRNA(Glu): step 2/2. This is Glutamate-1-semialdehyde 2,1-aminomutase from Shewanella sp. (strain MR-4).